The sequence spans 410 residues: Dihydrolipoyllysine-residue succinyltransferase component of 2-oxoglutarate dehydrogenase complex (410 aa).

Residues 3 to 81 enclose the Lipoyl-binding domain; that stretch reads IINIFIPDLP…QVIGTLLKIG (79 aa). N6-lipoyllysine is present on K44. Positions 112–150 constitute a Peripheral subunit-binding (PSBD) domain; that stretch reads TYSPTVRRLISMHDLRDVDIIQGTGTKNRLTRKDILNYL. Catalysis depends on residues H381 and D385.

It belongs to the 2-oxoacid dehydrogenase family. As to quaternary structure, forms a 24-polypeptide structural core with octahedral symmetry. Part of the 2-oxoglutarate dehydrogenase (OGDH) complex composed of E1 (2-oxoglutarate dehydrogenase), E2 (dihydrolipoamide succinyltransferase) and E3 (dihydrolipoamide dehydrogenase); the complex contains multiple copies of the three enzymatic components (E1, E2 and E3). It depends on (R)-lipoate as a cofactor.

It catalyses the reaction N(6)-[(R)-dihydrolipoyl]-L-lysyl-[protein] + succinyl-CoA = N(6)-[(R)-S(8)-succinyldihydrolipoyl]-L-lysyl-[protein] + CoA. Its pathway is amino-acid degradation; L-lysine degradation via saccharopine pathway; glutaryl-CoA from L-lysine: step 6/6. Functionally, E2 component of the 2-oxoglutarate dehydrogenase (OGDH) complex which catalyzes the second step in the conversion of 2-oxoglutarate to succinyl-CoA and CO(2). The chain is Dihydrolipoyllysine-residue succinyltransferase component of 2-oxoglutarate dehydrogenase complex (sucB) from Buchnera aphidicola subsp. Baizongia pistaciae (strain Bp).